The sequence spans 462 residues: Amino-acid permease AapA (462 aa).

12 consecutive transmembrane segments (helical) span residues 27-47 (LMAI…KSIH), 48-68 (FAGP…FFIM), 96-116 (AAFI…MADL), 134-154 (LPGL…VKLF), 160-180 (WFAL…ILLI), 209-229 (GFIL…LVGL), 252-272 (ILLF…WNVL), 279-299 (FVQV…NFVV), 343-363 (ALFF…LMPE), 366-386 (FTLI…ITVI), 410-430 (PLSN…LALA), and 435-455 (IALF…KVQT).

It belongs to the amino acid-polyamine-organocation (APC) superfamily.

Its subcellular location is the cell membrane. Functionally, probable amino-acid or metabolite transport protein. This chain is Amino-acid permease AapA (aapA), found in Bacillus subtilis (strain 168).